The following is a 136-amino-acid chain: Nucleoside diphosphate kinase (136 aa).

K10, F58, R86, T92, R104, and N114 together coordinate ATP. H117 acts as the Pros-phosphohistidine intermediate in catalysis.

The protein belongs to the NDK family. As to quaternary structure, homotetramer. Requires Mg(2+) as cofactor.

The protein localises to the cytoplasm. The enzyme catalyses a 2'-deoxyribonucleoside 5'-diphosphate + ATP = a 2'-deoxyribonucleoside 5'-triphosphate + ADP. It carries out the reaction a ribonucleoside 5'-diphosphate + ATP = a ribonucleoside 5'-triphosphate + ADP. Major role in the synthesis of nucleoside triphosphates other than ATP. The ATP gamma phosphate is transferred to the NDP beta phosphate via a ping-pong mechanism, using a phosphorylated active-site intermediate. This is Nucleoside diphosphate kinase from Mycobacterium sp. (strain MCS).